Consider the following 251-residue polypeptide: Phosphoribosylaminoimidazole-succinocarboxamide synthase (251 aa).

It belongs to the SAICAR synthetase family.

It carries out the reaction 5-amino-1-(5-phospho-D-ribosyl)imidazole-4-carboxylate + L-aspartate + ATP = (2S)-2-[5-amino-1-(5-phospho-beta-D-ribosyl)imidazole-4-carboxamido]succinate + ADP + phosphate + 2 H(+). Its pathway is purine metabolism; IMP biosynthesis via de novo pathway; 5-amino-1-(5-phospho-D-ribosyl)imidazole-4-carboxamide from 5-amino-1-(5-phospho-D-ribosyl)imidazole-4-carboxylate: step 1/2. The polypeptide is Phosphoribosylaminoimidazole-succinocarboxamide synthase (Ruegeria pomeroyi (strain ATCC 700808 / DSM 15171 / DSS-3) (Silicibacter pomeroyi)).